Consider the following 296-residue polypeptide: Stanniocalcin-2 (296 aa).

The first 24 residues, 1–24 (MCAERLGQFVTLALVFATLDPAQG), serve as a signal peptide directing secretion. Residues 21 to 44 (PAQGTDSTNPPEGPQDRSSQQKGR) form a disordered region. The segment covering 24–44 (GTDSTNPPEGPQDRSSQQKGR) has biased composition (polar residues). Asn-73 carries an N-linked (GlcNAc...) asparagine glycan. Positions 218 to 296 (PPTAAPEHQP…EQSEYSDIRR (79 aa)) are disordered. Residues 240 to 258 (RDTDHHLTANRGAKGERGS) show a composition bias toward basic and acidic residues. Residues 272 to 282 (GQSAQGPSGSS) show a composition bias toward low complexity.

Belongs to the stanniocalcin family. In terms of assembly, homodimer; disulfide-linked. As to expression, found in a variety of tissues including skeletal muscle, small intestine, kidney, liver and brain.

The protein localises to the secreted. Functionally, has an anti-hypocalcemic action on calcium and phosphate homeostasis. The chain is Stanniocalcin-2 (Stc2) from Mus musculus (Mouse).